The chain runs to 45 residues: Psychimicin (45 aa).

3 disulfides stabilise this stretch: Cys-10-Cys-24, Cys-14-Cys-36, and Cys-25-Cys-42.

As to quaternary structure, monomer. In terms of tissue distribution, hemolymph.

The protein resides in the secreted. In terms of biological role, has antimicrobial activity. Is particularly active against fungi, and to a lesser extent against Gram-positive and Gram-negative bacteria. The protein is Psychimicin of Oiketicus kirbyi (Bagworm moth).